Reading from the N-terminus, the 266-residue chain is 15-hydroxyprostaglandin dehydrogenase [NAD(+)] (266 aa).

NAD(+) is bound by residues 12–20 (GAAQGIGRA), 36–37 (DW), 63–65 (CDV), and asparagine 91. Substrate is bound by residues serine 138 and glutamine 148. Tyrosine 151 functions as the Proton acceptor in the catalytic mechanism. NAD(+)-binding positions include 151–155 (YCASK) and 186–188 (VNT).

This sequence belongs to the short-chain dehydrogenases/reductases (SDR) family. Homodimer.

It is found in the cytoplasm. The catalysed reaction is prostaglandin E2 + NAD(+) = 15-oxoprostaglandin E2 + NADH + H(+). The enzyme catalyses (15S)-hydroxy-(5Z,8Z,11Z,13E)-eicosatetraenoate + NAD(+) = 15-oxo-(5Z,8Z,11Z,13E)-eicosatetraenoate + NADH + H(+). It catalyses the reaction (11R)-hydroxy-(5Z,8Z,12E,14Z)-eicosatetraenoate + NAD(+) = 11-oxo-(5Z,8Z,12E,14Z)-eicosatetraenoate + NADH + H(+). It carries out the reaction lipoxin A4 + NAD(+) = 15-oxo-(5S,6R)-dihydroxy-(7E,9E,11Z,13E)-eicosatetraenoate + NADH + H(+). The catalysed reaction is 15-oxo-(5S,6R)-dihydroxy-(7E,9E,11Z)-eicosatrienoate + NADH + H(+) = (5S,6R,15S)-trihydroxy-(7E,9E,11Z)-eicosatrienoate + NAD(+). The enzyme catalyses prostaglandin A1 + NAD(+) = 15-oxo-prostaglandin A1 + NADH + H(+). It catalyses the reaction prostaglandin E1 + NAD(+) = 15-oxoprostaglandin E1 + NADH + H(+). It carries out the reaction 14-hydroxy-(4Z,7Z,10Z,12E,16Z,19Z)-docosahexaenoate + NAD(+) = 14-oxo-(4Z,7Z,10Z,12E,16Z,19Z)-docosahexaenoate + NADH + H(+). The catalysed reaction is resolvin E1 + NAD(+) = 18-oxo-resolvin E1 + NADH + H(+). The enzyme catalyses resolvin D1 + NAD(+) = 8-oxoresolvin D1 + NADH + H(+). It catalyses the reaction resolvin D1 + NAD(+) = 17-oxoresolvin D1 + NADH + H(+). It carries out the reaction resolvin D2 + NAD(+) = 7-oxoresolvin D2 + NADH + H(+). The catalysed reaction is resolvin D2 + NAD(+) = 16-oxoresolvin D2 + NADH + H(+). Its function is as follows. Catalyzes the NAD-dependent dehydrogenation (oxidation) of a broad array of hydroxylated polyunsaturated fatty acids (mainly eicosanoids and docosanoids, including prostaglandins, lipoxins and resolvins), yielding their corresponding keto (oxo) metabolites. Decreases the levels of the pro-proliferative prostaglandins such as prostaglandin E2 (whose activity is increased in cancer because of an increase in the expression of cyclooxygenase 2) and generates oxo-fatty acid products that can profoundly influence cell function by abrogating pro-inflammatory cytokine expression. Converts resolvins E1, D1 and D2 to their oxo products, which represents a mode of resolvin inactivation. Resolvin E1 plays important roles during the resolution phase of acute inflammation, while resolvins D1 and D2 have a unique role in obesity-induced adipose inflammation. This chain is 15-hydroxyprostaglandin dehydrogenase [NAD(+)] (HPGD), found in Macaca fascicularis (Crab-eating macaque).